Consider the following 436-residue polypeptide: 3-phosphoshikimate 1-carboxyvinyltransferase (436 aa).

Residues lysine 22, serine 23, and arginine 27 each coordinate 3-phosphoshikimate. Lysine 22 lines the phosphoenolpyruvate pocket. Phosphoenolpyruvate-binding residues include glycine 95 and arginine 123. 3-phosphoshikimate contacts are provided by serine 170, serine 171, glutamine 172, serine 201, aspartate 322, and lysine 349. Residue glutamine 172 coordinates phosphoenolpyruvate. The Proton acceptor role is filled by aspartate 322. Arginine 353, arginine 397, and lysine 422 together coordinate phosphoenolpyruvate.

The protein belongs to the EPSP synthase family. As to quaternary structure, monomer.

Its subcellular location is the cytoplasm. It catalyses the reaction 3-phosphoshikimate + phosphoenolpyruvate = 5-O-(1-carboxyvinyl)-3-phosphoshikimate + phosphate. It participates in metabolic intermediate biosynthesis; chorismate biosynthesis; chorismate from D-erythrose 4-phosphate and phosphoenolpyruvate: step 6/7. In terms of biological role, catalyzes the transfer of the enolpyruvyl moiety of phosphoenolpyruvate (PEP) to the 5-hydroxyl of shikimate-3-phosphate (S3P) to produce enolpyruvyl shikimate-3-phosphate and inorganic phosphate. The polypeptide is 3-phosphoshikimate 1-carboxyvinyltransferase (Ralstonia nicotianae (strain ATCC BAA-1114 / GMI1000) (Ralstonia solanacearum)).